A 186-amino-acid polypeptide reads, in one-letter code: Ribosome-recycling factor (186 aa).

The protein belongs to the RRF family.

It is found in the cytoplasm. Responsible for the release of ribosomes from messenger RNA at the termination of protein biosynthesis. May increase the efficiency of translation by recycling ribosomes from one round of translation to another. The sequence is that of Ribosome-recycling factor from Prosthecochloris aestuarii (strain DSM 271 / SK 413).